The primary structure comprises 918 residues: Protein translocase subunit SecA (918 aa).

ATP-binding positions include glutamine 87, 105–109 (GEGKT), and aspartate 494. Positions 863–883 (KQDDTSPKEYKKIGQEQRAEV) are enriched in basic and acidic residues. The interval 863–918 (KQDDTSPKEYKKIGQEQRAEVDMFGNELKSNKTKPQVSSTTSSGGGSERRSSRRKK) is disordered.

It belongs to the SecA family. In terms of assembly, monomer and homodimer. Part of the essential Sec protein translocation apparatus which comprises SecA, SecYEG and auxiliary proteins SecDF. Other proteins may also be involved.

The protein localises to the cell inner membrane. The protein resides in the cytoplasm. It carries out the reaction ATP + H2O + cellular proteinSide 1 = ADP + phosphate + cellular proteinSide 2.. Its function is as follows. Part of the Sec protein translocase complex. Interacts with the SecYEG preprotein conducting channel. Has a central role in coupling the hydrolysis of ATP to the transfer of proteins into and across the cell membrane, serving as an ATP-driven molecular motor driving the stepwise translocation of polypeptide chains across the membrane. The chain is Protein translocase subunit SecA from Leptospira biflexa serovar Patoc (strain Patoc 1 / Ames).